A 78-amino-acid chain; its full sequence is Hainantoxin-XX (78 aa).

The signal sequence occupies residues 1-23; sequence MKSATLLALSFLLIALYFLICEA. Positions 24–47 are excised as a propeptide; the sequence is EHSRYEEHEILEENMGDVVNLEQR. Intrachain disulfides connect Cys-49-Cys-62, Cys-56-Cys-66, and Cys-61-Cys-77.

Belongs to the hainantoxin family. 20 subfamily. Expressed by the venom gland.

It is found in the secreted. Putative ion channel inhibitor. This Cyriopagopus hainanus (Chinese bird spider) protein is Hainantoxin-XX.